The primary structure comprises 229 residues: Large ribosomal subunit protein uL1 (229 aa).

It belongs to the universal ribosomal protein uL1 family. Part of the 50S ribosomal subunit.

Its function is as follows. Binds directly to 23S rRNA. The L1 stalk is quite mobile in the ribosome, and is involved in E site tRNA release. Protein L1 is also a translational repressor protein, it controls the translation of the L11 operon by binding to its mRNA. This is Large ribosomal subunit protein uL1 from Pelagibacter ubique (strain HTCC1062).